The sequence spans 403 residues: RNA-binding motif, single-stranded-interacting protein 1 (403 aa).

Residues 30 to 56 form a disordered region; it reads PAHPMAPPSPSTTSSNNNSSSSSNSGW. Over residues 40–54 the composition is skewed to low complexity; sequence STTSSNNNSSSSSNS. 2 RRM domains span residues 62–135 and 141–226; these read TNLY…MAKQ and TNLY…FADG. Threonine 208 bears the Phosphothreonine mark.

The protein resides in the nucleus. Single-stranded DNA binding protein that interacts with the region upstream of the C-myc gene. Binds specifically to the DNA sequence motif 5'-[AT]CT[AT][AT]T-3'. Probably has a role in DNA replication. The protein is RNA-binding motif, single-stranded-interacting protein 1 (RBMS1) of Bos taurus (Bovine).